Consider the following 82-residue polypeptide: NAD(P)H-quinone oxidoreductase subunit O, organellar chromatophore (82 aa).

The protein belongs to the complex I NdhO subunit family. In terms of assembly, NDH-1 can be composed of about 15 different subunits; different subcomplexes with different compositions have been identified which probably have different functions.

The protein localises to the plastid. The protein resides in the organellar chromatophore thylakoid membrane. The catalysed reaction is a plastoquinone + NADH + (n+1) H(+)(in) = a plastoquinol + NAD(+) + n H(+)(out). It catalyses the reaction a plastoquinone + NADPH + (n+1) H(+)(in) = a plastoquinol + NADP(+) + n H(+)(out). In terms of biological role, NDH-1 shuttles electrons from an unknown electron donor, via FMN and iron-sulfur (Fe-S) centers, to quinones in the respiratory and/or the photosynthetic chain. The immediate electron acceptor for the enzyme in this species is believed to be plastoquinone. Couples the redox reaction to proton translocation, and thus conserves the redox energy in a proton gradient. Cyanobacterial NDH-1 also plays a role in inorganic carbon-concentration. In Paulinella chromatophora, this protein is NAD(P)H-quinone oxidoreductase subunit O, organellar chromatophore.